Consider the following 364-residue polypeptide: Aminomethyltransferase (364 aa).

It belongs to the GcvT family. As to quaternary structure, the glycine cleavage system is composed of four proteins: P, T, L and H.

It carries out the reaction N(6)-[(R)-S(8)-aminomethyldihydrolipoyl]-L-lysyl-[protein] + (6S)-5,6,7,8-tetrahydrofolate = N(6)-[(R)-dihydrolipoyl]-L-lysyl-[protein] + (6R)-5,10-methylene-5,6,7,8-tetrahydrofolate + NH4(+). Its function is as follows. The glycine cleavage system catalyzes the degradation of glycine. This chain is Aminomethyltransferase, found in Escherichia coli (strain SMS-3-5 / SECEC).